The following is a 112-amino-acid chain: uncharacterized protein (112 aa).

This is an uncharacterized protein from Acanthamoeba polyphaga mimivirus (APMV).